Here is a 144-residue protein sequence, read N- to C-terminus: Large ribosomal subunit protein uL15 (144 aa).

Residues 1–45 (MNLNTLSPDPGSRPSRRRVGRGIGSGLGKTCGKGHKGQKSRAGGY) are disordered. The segment covering 21–31 (RGIGSGLGKTC) has biased composition (gly residues).

It belongs to the universal ribosomal protein uL15 family. Part of the 50S ribosomal subunit.

Functionally, binds to the 23S rRNA. The chain is Large ribosomal subunit protein uL15 from Legionella pneumophila (strain Corby).